Reading from the N-terminus, the 493-residue chain is Cobyric acid synthase (493 aa).

Residues 246-440 (PIDIAVIKMP…IHGVFDGVSF (195 aa)) form the GATase cobBQ-type domain. Cysteine 326 functions as the Nucleophile in the catalytic mechanism. Histidine 432 is an active-site residue.

It belongs to the CobB/CobQ family. CobQ subfamily.

It participates in cofactor biosynthesis; adenosylcobalamin biosynthesis. Catalyzes amidations at positions B, D, E, and G on adenosylcobyrinic A,C-diamide. NH(2) groups are provided by glutamine, and one molecule of ATP is hydrogenolyzed for each amidation. The chain is Cobyric acid synthase from Clostridium botulinum (strain Langeland / NCTC 10281 / Type F).